Reading from the N-terminus, the 269-residue chain is Pertussis toxin subunit 1 (269 aa).

Positions 1–34 (MRCTRAIRQTARTGWLTWLAILAVTAPVTSPAWA) are cleaved as a signal peptide. Tryptophan 60 is a binding site for NAD(+). Residues histidine 69 and glutamate 163 contribute to the active site. Residues cysteine 75 and cysteine 235 are joined by a disulfide bond.

This sequence belongs to the bacterial exotoxin subunit A family. Pertussis toxin contains five different chains, S1-S5. They are organized into 2 functional subunits: A, composed of S1 (which is toxic) and B, containing S2, S3, S5, and two copies of S4 (B binds to the membrane receptors). Dimers of S2-S4 and S3-S4 are held together by S5.

It localises to the secreted. Its function is as follows. S1 is an NAD-dependent ADP-ribosyltransferase, which plays a crucial role in the pathogenesis of B.pertussis causing disruption of normal host cellular regulation. It catalyzes the ADP-ribosylation of a cysteine in the alpha subunit of host heterotrimeric G proteins. In the absence of G proteins it also catalyzes the cleavage of NAD(+) into ADP-ribose and nicotinamide. It irreversibly uncouples the G-alpha GTP-binding proteins from their membrane receptors. The protein is Pertussis toxin subunit 1 (ptxA) of Bordetella pertussis (strain Tohama I / ATCC BAA-589 / NCTC 13251).